The primary structure comprises 77 residues: Conotoxin VnMEKL-0111 (77 aa).

The N-terminal stretch at 1–19 (MEKLTILLLVAAVLMSTQA) is a signal peptide. The propeptide occupies 20-46 (LIQHDGEKSQKAKMKFLTARTLSAKTR). 3 cysteine pairs are disulfide-bonded: C50-C66, C57-C71, and C65-C75.

It belongs to the conotoxin O2 superfamily. As to expression, expressed by the venom duct.

Its subcellular location is the secreted. The chain is Conotoxin VnMEKL-0111 from Conus ventricosus (Mediterranean cone).